Here is a 521-residue protein sequence, read N- to C-terminus: Type-2 serine--tRNA ligase (521 aa).

A316 is an L-serine binding site. Zn(2+) is bound at residue C318. Position 347 (R347) interacts with L-serine. Residues 347-349 (RWE) and 358-359 (RV) each bind ATP. 364-366 (RVE) contacts L-serine. Zn(2+)-binding residues include E366 and C473. Position 480 (R480) interacts with ATP.

It belongs to the class-II aminoacyl-tRNA synthetase family. Type-2 seryl-tRNA synthetase subfamily. In terms of assembly, homodimer. Requires Zn(2+) as cofactor.

It localises to the cytoplasm. The enzyme catalyses tRNA(Ser) + L-serine + ATP = L-seryl-tRNA(Ser) + AMP + diphosphate + H(+). It catalyses the reaction tRNA(Sec) + L-serine + ATP = L-seryl-tRNA(Sec) + AMP + diphosphate + H(+). Its pathway is aminoacyl-tRNA biosynthesis; selenocysteinyl-tRNA(Sec) biosynthesis; L-seryl-tRNA(Sec) from L-serine and tRNA(Sec): step 1/1. Its function is as follows. Catalyzes the attachment of serine to tRNA(Ser). Is also able to aminoacylate tRNA(Sec) with serine, to form the misacylated tRNA L-seryl-tRNA(Sec), which will be further converted into selenocysteinyl-tRNA(Sec). The chain is Type-2 serine--tRNA ligase (serS) from Methanocaldococcus jannaschii (strain ATCC 43067 / DSM 2661 / JAL-1 / JCM 10045 / NBRC 100440) (Methanococcus jannaschii).